The primary structure comprises 298 residues: Ribosomal RNA processing protein 36 homolog (298 aa).

Positions 1–131 (MKPDIIKKRR…SDAPVEMTAM (131 aa)) are disordered. Residues 14–56 (SDDEDEYNEEDEMYEDDNNNYEEDEDDDDDDDEDDEDDDENEE) are compositionally biased toward acidic residues. Composition is skewed to polar residues over residues 61-70 (QQLSNVSFSS) and 83-92 (LNLNTITKNL). Coiled-coil stretches lie at residues 88-112 (ITKN…MNSK) and 196-228 (RERD…KNKL). A compositionally biased stretch (basic and acidic residues) spans 98–111 (FKKEEQQEKEEMNS). A disordered region spans residues 279–298 (ISSKEKTFLPQRRSFDQDEN).

This sequence belongs to the RRP36 family.

The protein localises to the nucleus. The protein resides in the nucleolus. In terms of biological role, involved in the early processing steps of the pre-rRNA in the maturation pathway leading to the 18S rRNA. The polypeptide is Ribosomal RNA processing protein 36 homolog (Dictyostelium discoideum (Social amoeba)).